We begin with the raw amino-acid sequence, 37 residues long: Disintegrin morulustatin (37 aa).

3 disulfides stabilise this stretch: Cys12–Cys16, Cys22–Cys36, and Cys24–Cys31.

It belongs to the venom metalloproteinase (M12B) family. P-II subfamily. P-IIa sub-subfamily. In terms of tissue distribution, expressed by the venom gland.

The protein localises to the secreted. Functionally, inhibits ADP-induced platelet aggregation in human whole blood in a concentration-dependent manner (IC(50)=89.5 nM). The polypeptide is Disintegrin morulustatin (Crotalus morulus (Tamaulipan rock rattlesnake)).